The sequence spans 210 residues: FMN-dependent NADH:quinone oxidoreductase 9 (210 aa).

Residues S10 and 16–18 (SAS) each bind FMN.

It belongs to the azoreductase type 1 family. In terms of assembly, homodimer. Requires FMN as cofactor.

It catalyses the reaction 2 a quinone + NADH + H(+) = 2 a 1,4-benzosemiquinone + NAD(+). The enzyme catalyses N,N-dimethyl-1,4-phenylenediamine + anthranilate + 2 NAD(+) = 2-(4-dimethylaminophenyl)diazenylbenzoate + 2 NADH + 2 H(+). Its function is as follows. Quinone reductase that provides resistance to thiol-specific stress caused by electrophilic quinones. In terms of biological role, also exhibits azoreductase activity. Catalyzes the reductive cleavage of the azo bond in aromatic azo compounds to the corresponding amines. The chain is FMN-dependent NADH:quinone oxidoreductase 9 from Burkholderia lata (strain ATCC 17760 / DSM 23089 / LMG 22485 / NCIMB 9086 / R18194 / 383).